Here is a 117-residue protein sequence, read N- to C-terminus: Neurotoxic enhancer CSTX-13 (117 aa).

The signal sequence occupies residues 1–20 (MKVLVIFAVLSLVIFSNCSA). Residues 21–47 (ETDEDFFGEESFEADDIIPFIAKEQVR) constitute a propeptide that is removed on maturation. 4 cysteine pairs are disulfide-bonded: Cys-50–Cys-65, Cys-57–Cys-74, Cys-64–Cys-95, and Cys-76–Cys-93. A propeptide spanning residues 82-87 (RSETAR) is cleaved from the precursor. Thr-116 carries the post-translational modification Threonine amide.

It belongs to the neurotoxin 19 (CSTX) family. 12 subfamily. Heterodimer of A and B chains; disulfide-linked. Interacts with CSTX-1 (AC P81694) (Kd=430 nM), and with CSTX-9 (AC P58604) (Kd=370 nM). As to expression, expressed by the venom gland.

Its subcellular location is the secreted. The protein resides in the target cell membrane. Synergistic toxin that induces or increases a cytolytic effect when combined with CSTX-1 (AC P81694) or CSTX-9 (AC P58604). When alone, has a weak insecticidal activity, with an unknown molecular target. This is Neurotoxic enhancer CSTX-13 from Cupiennius salei (American wandering spider).